A 288-amino-acid chain; its full sequence is 4-hydroxy-3-methylbut-2-enyl diphosphate reductase (288 aa).

C12 lines the [4Fe-4S] cluster pocket. (2E)-4-hydroxy-3-methylbut-2-enyl diphosphate is bound by residues H42 and H77. H42 and H77 together coordinate dimethylallyl diphosphate. Positions 42 and 77 each coordinate isopentenyl diphosphate. C99 contributes to the [4Fe-4S] cluster binding site. Residue H127 coordinates (2E)-4-hydroxy-3-methylbut-2-enyl diphosphate. H127 is a binding site for dimethylallyl diphosphate. Position 127 (H127) interacts with isopentenyl diphosphate. E129 functions as the Proton donor in the catalytic mechanism. Position 165 (T165) interacts with (2E)-4-hydroxy-3-methylbut-2-enyl diphosphate. Residue C193 coordinates [4Fe-4S] cluster. 4 residues coordinate (2E)-4-hydroxy-3-methylbut-2-enyl diphosphate: S221, S222, N223, and S265. Dimethylallyl diphosphate-binding residues include S221, S222, N223, and S265. Residues S221, S222, N223, and S265 each contribute to the isopentenyl diphosphate site.

It belongs to the IspH family. [4Fe-4S] cluster serves as cofactor.

The catalysed reaction is isopentenyl diphosphate + 2 oxidized [2Fe-2S]-[ferredoxin] + H2O = (2E)-4-hydroxy-3-methylbut-2-enyl diphosphate + 2 reduced [2Fe-2S]-[ferredoxin] + 2 H(+). It catalyses the reaction dimethylallyl diphosphate + 2 oxidized [2Fe-2S]-[ferredoxin] + H2O = (2E)-4-hydroxy-3-methylbut-2-enyl diphosphate + 2 reduced [2Fe-2S]-[ferredoxin] + 2 H(+). It functions in the pathway isoprenoid biosynthesis; dimethylallyl diphosphate biosynthesis; dimethylallyl diphosphate from (2E)-4-hydroxy-3-methylbutenyl diphosphate: step 1/1. The protein operates within isoprenoid biosynthesis; isopentenyl diphosphate biosynthesis via DXP pathway; isopentenyl diphosphate from 1-deoxy-D-xylulose 5-phosphate: step 6/6. Its function is as follows. Catalyzes the conversion of 1-hydroxy-2-methyl-2-(E)-butenyl 4-diphosphate (HMBPP) into a mixture of isopentenyl diphosphate (IPP) and dimethylallyl diphosphate (DMAPP). Acts in the terminal step of the DOXP/MEP pathway for isoprenoid precursor biosynthesis. The sequence is that of 4-hydroxy-3-methylbut-2-enyl diphosphate reductase from Thermoanaerobacter pseudethanolicus (strain ATCC 33223 / 39E) (Clostridium thermohydrosulfuricum).